Here is a 124-residue protein sequence, read N- to C-terminus: Fluoride-specific ion channel FluC (124 aa).

4 consecutive transmembrane segments (helical) span residues 4-24 (VIFI…LSGW), 32-52 (AFPY…GLIM), 68-88 (GLTI…YETF), and 96-116 (LLIA…FTWL). The Na(+) site is built by glycine 75 and threonine 78.

Belongs to the fluoride channel Fluc/FEX (TC 1.A.43) family.

The protein localises to the cell inner membrane. The enzyme catalyses fluoride(in) = fluoride(out). With respect to regulation, na(+) is not transported, but it plays an essential structural role and its presence is essential for fluoride channel function. In terms of biological role, fluoride-specific ion channel. Important for reducing fluoride concentration in the cell, thus reducing its toxicity. The polypeptide is Fluoride-specific ion channel FluC (Geotalea daltonii (strain DSM 22248 / JCM 15807 / FRC-32) (Geobacter daltonii)).